Reading from the N-terminus, the 561-residue chain is 2-succinyl-5-enolpyruvyl-6-hydroxy-3-cyclohexene-1-carboxylate synthase (561 aa).

It belongs to the TPP enzyme family. MenD subfamily. As to quaternary structure, homodimer. The cofactor is Mg(2+). It depends on Mn(2+) as a cofactor. Requires thiamine diphosphate as cofactor.

The catalysed reaction is isochorismate + 2-oxoglutarate + H(+) = 5-enolpyruvoyl-6-hydroxy-2-succinyl-cyclohex-3-ene-1-carboxylate + CO2. The protein operates within quinol/quinone metabolism; 1,4-dihydroxy-2-naphthoate biosynthesis; 1,4-dihydroxy-2-naphthoate from chorismate: step 2/7. It participates in cofactor biosynthesis; phylloquinone biosynthesis. Functionally, catalyzes the thiamine diphosphate-dependent decarboxylation of 2-oxoglutarate and the subsequent addition of the resulting succinic semialdehyde-thiamine pyrophosphate anion to isochorismate to yield 2-succinyl-5-enolpyruvyl-6-hydroxy-3-cyclohexene-1-carboxylate (SEPHCHC). The polypeptide is 2-succinyl-5-enolpyruvyl-6-hydroxy-3-cyclohexene-1-carboxylate synthase (Synechococcus sp. (strain CC9605)).